The primary structure comprises 86 residues: Small ribosomal subunit protein bS20 (86 aa).

The segment covering 1-16 (MANIKSQEKRIRTNER) has biased composition (basic and acidic residues). The tract at residues 1–25 (MANIKSQEKRIRTNERRRLRNQSVK) is disordered.

The protein belongs to the bacterial ribosomal protein bS20 family.

Its function is as follows. Binds directly to 16S ribosomal RNA. The polypeptide is Small ribosomal subunit protein bS20 (Mycobacterium sp. (strain JLS)).